The primary structure comprises 144 residues: D-aminoacyl-tRNA deacylase (144 aa).

A Gly-cisPro motif, important for rejection of L-amino acids motif is present at residues 136–137 (GP).

The protein belongs to the DTD family. As to quaternary structure, homodimer.

It is found in the cytoplasm. It catalyses the reaction glycyl-tRNA(Ala) + H2O = tRNA(Ala) + glycine + H(+). It carries out the reaction a D-aminoacyl-tRNA + H2O = a tRNA + a D-alpha-amino acid + H(+). An aminoacyl-tRNA editing enzyme that deacylates mischarged D-aminoacyl-tRNAs. Also deacylates mischarged glycyl-tRNA(Ala), protecting cells against glycine mischarging by AlaRS. Acts via tRNA-based rather than protein-based catalysis; rejects L-amino acids rather than detecting D-amino acids in the active site. By recycling D-aminoacyl-tRNA to D-amino acids and free tRNA molecules, this enzyme counteracts the toxicity associated with the formation of D-aminoacyl-tRNA entities in vivo and helps enforce protein L-homochirality. The sequence is that of D-aminoacyl-tRNA deacylase from Vibrio atlanticus (strain LGP32) (Vibrio splendidus (strain Mel32)).